The sequence spans 808 residues: Sucrose synthase 4 (808 aa).

The GT-B glycosyltransferase stretch occupies residues 277–754; the sequence is MVFNVVILSP…GLERIQEKYT (478 aa).

The protein belongs to the glycosyltransferase 1 family. Plant sucrose synthase subfamily. As to expression, detected in the whole plant with highest expression in young rosette leaves and roots.

It catalyses the reaction an NDP-alpha-D-glucose + D-fructose = a ribonucleoside 5'-diphosphate + sucrose + H(+). Sucrose-cleaving enzyme that provides UDP-glucose and fructose for various metabolic pathways. This Arabidopsis thaliana (Mouse-ear cress) protein is Sucrose synthase 4 (SUS4).